The chain runs to 435 residues: Serine carboxypeptidase-like 16 (435 aa).

A signal peptide spans 1-23; the sequence is MGSWIPKLLLLQLVLLLTKHADS. 3 cysteine pairs are disulfide-bonded: Cys-82-Cys-325, Cys-246-Cys-260, and Cys-284-Cys-291. N-linked (GlcNAc...) asparagine glycosylation is present at Asn-103. Ser-178 is an active-site residue. Asn-305 carries N-linked (GlcNAc...) asparagine glycosylation. The active site involves Asp-360. Asn-376 is a glycosylation site (N-linked (GlcNAc...) asparagine). His-413 is a catalytic residue.

Belongs to the peptidase S10 family. Expressed in seedlings, roots and leaves.

It is found in the secreted. Its function is as follows. Probable carboxypeptidase. The sequence is that of Serine carboxypeptidase-like 16 (SCPL16) from Arabidopsis thaliana (Mouse-ear cress).